Reading from the N-terminus, the 777-residue chain is Beta-hexosaminidase (777 aa).

The N-terminal stretch at 1-18 (MKRLTFGACICCLLSLMA) is a signal peptide. Cys19 is lipidated: N-palmitoyl cysteine. Cys19 carries S-diacylglycerol cysteine lipidation. One can recognise a PA14 domain in the interval 625 to 766 (APKPGLTIRT…VMIRLKGEEK (142 aa)).

Belongs to the glycosyl hydrolase 20 family.

The protein resides in the cell outer membrane. It catalyses the reaction Hydrolysis of terminal non-reducing N-acetyl-D-hexosamine residues in N-acetyl-beta-D-hexosaminides.. In Porphyromonas gingivalis (strain ATCC BAA-308 / W83), this protein is Beta-hexosaminidase (nahA).